The following is a 576-amino-acid chain: MFRFVGRSGFALRGSLQLRKDVLRSRTTAVAKRHYSSSNGNNGGGFSSAILSVLGGSLIGGGFVAYALGSQFEKEKSVSDLSIARLEDLDSPEYCDKETFAKALVELKDVLENDPENFTVAKDDLDAHSDTYFNSHHAEANQRPEIVLYPRNTEDVSKLLKICHKYSIPVIPFSGGTSLEGHFLPTRPGSCVVLDISKYLNKIIQLNKEDLDVVVQGGVPWEELNEYLNDHGLLFGCDPGPGAQIAGCIANSCSGTNAYRYGTMKENVVNITMCMADGTIVKTKRRPRKSSAGYNLNGLIIGSEGTLGIVTEATIKCHVRSTFETVAVVPFPTVSDAASCSSHLIQAGIQLNAMELLDDNMMKIINQSGATSKDNWVESPTLFFKIGGRSEQIIQEVIKEVEKIASQHNNTKFEFATDEDSKLELWEARKVALWSTIDTGRKTNPDANIWTTDVAVPISKFADVINATKEEMNASGLLTSLVGHAGDGNFHAFIIYNTEQRKTAETIVENMVKRAIDAEGTCTGEHGVGIGKRDYLLEEVGEDTVAVMRKLKLALDPKRILNPDKIFKIDPNDHQH.

The 182-residue stretch at Glu139–Arg320 folds into the FAD-binding PCMH-type domain.

It belongs to the FAD-binding oxidoreductase/transferase type 4 family. Requires FAD as cofactor. Zn(2+) serves as cofactor.

It is found in the mitochondrion matrix. It carries out the reaction (R)-lactate + 2 Fe(III)-[cytochrome c] = 2 Fe(II)-[cytochrome c] + pyruvate + 2 H(+). Functionally, catalyzes the stereospecific oxidation of D-lactate to pyruvate. This is D-lactate dehydrogenase [cytochrome], mitochondrial (DLD1) from Kluyveromyces lactis (strain ATCC 8585 / CBS 2359 / DSM 70799 / NBRC 1267 / NRRL Y-1140 / WM37) (Yeast).